The chain runs to 236 residues: MKGGDKMKKLILLMLLLPISLIGCTDEESSVTVGHTTVYYTNVPDAKAEVLAGYLQEEFGFTSDTDILLSMSGNEYEVRIPSSYSSPSEVEESFKVYFALLASRVSEEVFFGSPVKLVLVTHQNDELFAVKNQYSFEKAGRVFVYFKGVDREQAFNLANYLESLVGENYDWDVIFEQSEGVYHVVPFVGINDASELTPEMENSYQSMATELEDVLGGDVVVHLVNFEGYEVAAFEG.

The N-terminal stretch at 1–29 is a signal peptide; the sequence is MKGGDKMKKLILLMLLLPISLIGCTDEES.

This is an uncharacterized protein from Archaeoglobus fulgidus (strain ATCC 49558 / DSM 4304 / JCM 9628 / NBRC 100126 / VC-16).